The primary structure comprises 331 residues: Activator of 90 kDa heat shock protein ATPase homolog 2 (331 aa).

It belongs to the AHA1 family.

Its function is as follows. Co-chaperone that stimulates HSP90 ATPase activity. The protein is Activator of 90 kDa heat shock protein ATPase homolog 2 (Ahsa2) of Mus musculus (Mouse).